The following is a 177-amino-acid chain: Adenine phosphoribosyltransferase (177 aa).

This sequence belongs to the purine/pyrimidine phosphoribosyltransferase family. Homodimer.

The protein resides in the cytoplasm. The enzyme catalyses AMP + diphosphate = 5-phospho-alpha-D-ribose 1-diphosphate + adenine. It functions in the pathway purine metabolism; AMP biosynthesis via salvage pathway; AMP from adenine: step 1/1. Functionally, catalyzes a salvage reaction resulting in the formation of AMP, that is energically less costly than de novo synthesis. This Chlorobium phaeovibrioides (strain DSM 265 / 1930) (Prosthecochloris vibrioformis (strain DSM 265)) protein is Adenine phosphoribosyltransferase.